The chain runs to 610 residues: Elongation factor 4 (610 aa).

One can recognise a tr-type G domain in the interval 15–197 (KSIRNFSIIA…RIINDIPYPK (183 aa)). GTP-binding positions include 27–32 (DHGKST) and 144–147 (NKID).

This sequence belongs to the TRAFAC class translation factor GTPase superfamily. Classic translation factor GTPase family. LepA subfamily.

It is found in the cell membrane. It carries out the reaction GTP + H2O = GDP + phosphate + H(+). In terms of biological role, required for accurate and efficient protein synthesis under certain stress conditions. May act as a fidelity factor of the translation reaction, by catalyzing a one-codon backward translocation of tRNAs on improperly translocated ribosomes. Back-translocation proceeds from a post-translocation (POST) complex to a pre-translocation (PRE) complex, thus giving elongation factor G a second chance to translocate the tRNAs correctly. Binds to ribosomes in a GTP-dependent manner. The protein is Elongation factor 4 of Buchnera aphidicola subsp. Acyrthosiphon pisum (strain APS) (Acyrthosiphon pisum symbiotic bacterium).